The primary structure comprises 459 residues: Chromosomal replication initiator protein DnaA (459 aa).

Residues 1 to 74 (MQKIETFWYF…DEMAQGHFNE (74 aa)) are domain I, interacts with DnaA modulators. The domain II stretch occupies residues 74–122 (EKIHFKLELKDPAEIKTATIKAPEPKSKEDKKPPTDKAHGTTARKTNPS). Residues 91–123 (ATIKAPEPKSKEDKKPPTDKAHGTTARKTNPSR) are disordered. The span at 96–112 (PEPKSKEDKKPPTDKAH) shows a compositional bias: basic and acidic residues. Residues 123 to 339 (RLNPAFTFDA…GALKRVLAYS (217 aa)) form a domain III, AAA+ region region. ATP contacts are provided by Gly-167, Gly-169, Lys-170, and Thr-171. Residues 340–459 (RFTGHPISLD…YSTLIHILRG (120 aa)) form a domain IV, binds dsDNA region.

It belongs to the DnaA family. In terms of assembly, oligomerizes as a right-handed, spiral filament on DNA at oriC.

It is found in the cytoplasm. Plays an essential role in the initiation and regulation of chromosomal replication. ATP-DnaA binds to the origin of replication (oriC) to initiate formation of the DNA replication initiation complex once per cell cycle. Binds the DnaA box (a 9 base pair repeat at the origin) and separates the double-stranded (ds)DNA. Forms a right-handed helical filament on oriC DNA; dsDNA binds to the exterior of the filament while single-stranded (ss)DNA is stabiized in the filament's interior. The ATP-DnaA-oriC complex binds and stabilizes one strand of the AT-rich DNA unwinding element (DUE), permitting loading of DNA polymerase. After initiation quickly degrades to an ADP-DnaA complex that is not apt for DNA replication. Binds acidic phospholipids. The protein is Chromosomal replication initiator protein DnaA of Nitrosomonas eutropha (strain DSM 101675 / C91 / Nm57).